The sequence spans 509 residues: Maturase K (509 aa).

This sequence belongs to the intron maturase 2 family. MatK subfamily.

It localises to the plastid. The protein resides in the chloroplast. Usually encoded in the trnK tRNA gene intron. Probably assists in splicing its own and other chloroplast group II introns. In Thuja occidentalis (Northern white-cedar), this protein is Maturase K.